The following is a 517-amino-acid chain: Cytochrome P450 monooxygenase calE (517 aa).

Asn8 is a glycosylation site (N-linked (GlcNAc...) asparagine). A helical membrane pass occupies residues 14–34 (SLMHHYILIAILVASIIAMVV). Cys458 provides a ligand contact to heme.

Belongs to the cytochrome P450 family. Requires heme as cofactor.

It localises to the membrane. Its pathway is secondary metabolite biosynthesis. Cytochrome P450 monooxygenase; part of the gene cluster that mediates the biosynthesis of calbistrin A and related compounds. Calbistrin A is a secondary metabolite with an interesting structure that was recently found to have bioactivity against leukemia cells. It consists of two polyketides linked by an ester bond: a bicyclic decalin containing polyketide and a linear 12 carbon dioic acid structure. The polyketide synthase calA is probably responsible for forming the decalin moiety. Because calA lacks a designated enoylreductase (ER) domain, the required activity is provided by the trans-enoyl reductase calK. Following release from the PKS, calF then probably catalyzes the oxidation and the subsequent Diels Alder cycloisomerization that lead to the formation of the decalin moiety. The decalin polyketide backbone includes two C-methyl groups, at C7 and C11 in backbone, of which the C7 position is probably methylated by the methyltransferase domain of calA. A candidate for adding the methyl group at C11, if not done by CalA, is the cluster methyltransferase calH. Several additional tailoring enzymes within the cluster could be involved in the modification of the decalin polyketide product. Those include the 3 cytochrome P450 monooxygenases CalE, CalG and CalL, of which one might be responsible for the introduction of the extra hydroxyl group attached to the backbone of the decalin moiety, at position C9 in the backbone, that allows for attachment of the linear moiety. One tailoring enzyme activity that is expected to be involved in biosynthesis of calbistrin is an acyltransferase for connecting the two polyketide synthase products, and which could be performed by the cluster acyltransferase calJ. The enzyme responsible for the biosynthesis of the linear moiety, probably a second PKS, has not been identified yet. The sequence is that of Cytochrome P450 monooxygenase calE from Penicillium decumbens.